We begin with the raw amino-acid sequence, 648 residues long: EF-hand domain-containing protein 1 (648 aa).

The required for its localization in the mitotic spindle and interaction with alpha-tubulin stretch occupies residues 1–45 (MGTNPVHGLPFLPGSSFTDSTKTAFHRSQTLNYRNGYAVVRRPTM). DM10 domains lie at 93–198 (DKKV…ESQG), 239–359 (DKQV…KDKF), and 416–520 (DNKV…ESNA). The EF-hand domain occupies 582-617 (SYKENLRETFQMYDKDESGYVDRETFFKICETLNVP).

Microtubule inner protein component of sperm flagellar doublet microtubules. Interacts with the C-terminus of CACNA1E. Interacts with alpha-tubulin. Expressed in adult brain including hippocampus, cerebellum, cerebral cortex, thalamus, hypothalamus, amygdala and upper brainstem. Expressed in soma and dentrites of pyramidal neurons of the hippocampal CA1 region, pyramidal neurons of the cerebral cortex and Purkinje cells of cerebellum. Highly expressed in testis, trachea, and oviduct, moderately in lung, and slightly in brain. Highly expressed in sperm flagella and tracheal cilia (at protein level).

It is found in the cytoplasm. Its subcellular location is the cytoskeleton. It localises to the cilium axoneme. The protein localises to the flagellum axoneme. The protein resides in the microtubule organizing center. It is found in the centrosome. Its subcellular location is the spindle. It localises to the spindle pole. Functionally, microtubule inner protein (MIP) part of the dynein-decorated doublet microtubules (DMTs) in cilia axoneme, which is required for motile cilia beating. Microtubule-associated protein which regulates cell division and neuronal migration during cortical development. Necessary for radial and tangential cell migration during brain development, possibly acting as a regulator of cell morphology and process formation during migration. May enhance calcium influx through CACNA1E and stimulate programmed cell death. Overexpression of EFHC1 in hippocampal primary culture neurons induced apoptosis. The sequence is that of EF-hand domain-containing protein 1 (Efhc1) from Mus musculus (Mouse).